A 236-amino-acid chain; its full sequence is Eukaryotic translation initiation factor 3 subunit J (236 aa).

Positions 1 to 84 are disordered; sequence MADDWESAAD…RLEEEAEAQR (84 aa). Acidic residues predominate over residues 28–46; it reads GEDEDEDIKDSWEDEEEKK. Composition is skewed to basic and acidic residues over residues 47-58 and 68-77; these read DEEKPTKTEAPA and AKLEQQARLE.

It belongs to the eIF-3 subunit J family. Component of the eukaryotic translation initiation factor 3 (eIF-3) complex. The eIF-3 complex interacts with pix.

It is found in the cytoplasm. Functionally, component of the eukaryotic translation initiation factor 3 (eIF-3) complex, which is involved in protein synthesis of a specialized repertoire of mRNAs and, together with other initiation factors, stimulates binding of mRNA and methionyl-tRNAi to the 40S ribosome. The eIF-3 complex specifically targets and initiates translation of a subset of mRNAs involved in cell proliferation. This is Eukaryotic translation initiation factor 3 subunit J from Drosophila yakuba (Fruit fly).